Reading from the N-terminus, the 100-residue chain is Urease subunit gamma (100 aa).

It belongs to the urease gamma subunit family. In terms of assembly, heterotrimer of UreA (gamma), UreB (beta) and UreC (alpha) subunits. Three heterotrimers associate to form the active enzyme.

It localises to the cytoplasm. It carries out the reaction urea + 2 H2O + H(+) = hydrogencarbonate + 2 NH4(+). The protein operates within nitrogen metabolism; urea degradation; CO(2) and NH(3) from urea (urease route): step 1/1. This is Urease subunit gamma from Rhodopseudomonas palustris (strain ATCC BAA-98 / CGA009).